The sequence spans 1584 residues: Adhesion G protein-coupled receptor B1 (1584 aa).

The signal sequence occupies residues 1 to 30 (MRGQAAAPGPVWILAPLLLLLLLLGRRARA). The Extracellular segment spans residues 31–948 (AAGADAGPGP…ANMEKATLPS (918 aa)). An N-linked (GlcNAc...) asparagine glycan is attached at asparagine 64. Positions 146–167 (RRQQPPQHDGLRPRAGPPGPTD) are disordered. Residues 261–315 (TGGWKLWSLWGECTRDCGGGLQTRTRTCLPAPGVEGGGCEGVLEEGRQCNREACG) enclose the TSP type-1 1 domain. Disulfide bonds link cysteine 273/cysteine 309, cysteine 277/cysteine 314, and cysteine 288/cysteine 299. The interval 313-335 (ACGPAGRTSSRSQSLRSTDARRR) is disordered. Residues 319–329 (RTSSRSQSLRS) are compositionally biased toward low complexity. TSP type-1 domains lie at 354 to 407 (DPAA…AVCP), 409 to 462 (HGAW…ALCP), 467 to 520 (DGNW…QQCP), and 522 to 575 (DGKW…QRCP). Cystine bridges form between cysteine 366/cysteine 400, cysteine 370/cysteine 406, cysteine 381/cysteine 390, cysteine 421/cysteine 456, cysteine 425/cysteine 461, cysteine 436/cysteine 446, cysteine 479/cysteine 514, cysteine 483/cysteine 519, cysteine 494/cysteine 504, cysteine 534/cysteine 569, cysteine 538/cysteine 574, cysteine 549/cysteine 559, cysteine 581/cysteine 616, and cysteine 604/cysteine 634. Residue asparagine 401 is glycosylated (N-linked (GlcNAc...) asparagine). Asparagine 607 carries an N-linked (GlcNAc...) asparagine glycan. Threonine 609 is subject to Phosphothreonine. Asparagine 692, asparagine 844, asparagine 877, and asparagine 881 each carry an N-linked (GlcNAc...) asparagine glycan. Residues 760-939 (RDAYQVTDNL…AILAQLSADA (180 aa)) form the GAIN-B domain. 2 cysteine pairs are disulfide-bonded: cysteine 884/cysteine 921 and cysteine 909/cysteine 923. The GPS stretch occupies residues 884-939 (CILWDETDVPSSSAPPQLGPWSWRGCRTVPLDALRTRCLCDRLSTFAILAQLSADA). Positions 927–943 (STFAILAQLSADANMEK) are N-terminal stalk following vasculostatin-120 cleavage which is not required for signaling activity. A helical transmembrane segment spans residues 949–969 (VTLIVGCGVSSLTLLMLVIIY). Residues 970–980 (VSVWRYIRSER) lie on the Cytoplasmic side of the membrane. The chain crosses the membrane as a helical span at residues 981-1001 (SVILINFCLSIISSNALILIG). At 1002-1008 (QTQTRNK) the chain is on the extracellular side. Residues 1009–1029 (VVCTLVAAFLHFFFLSSFCWV) traverse the membrane as a helical segment. The Cytoplasmic segment spans residues 1030-1052 (LTEAWQSYMAVTGHLRNRLIRKR). A helical transmembrane segment spans residues 1053–1073 (FLCLGWGLPALVVAISVGFTK). Over 1074–1093 (AKGYSTMNYCWLSLEGGLLY) the chain is Extracellular. Residues 1094-1114 (AFVGPAAAVVLVNMVIGILVF) traverse the membrane as a helical segment. At 1115–1136 (NKLVSKDGITDKKLKERAGASL) the chain is on the cytoplasmic side. The chain crosses the membrane as a helical span at residues 1137–1157 (WSSCVVLPLLALTWMSAVLAV). Over 1158-1166 (TDRRSALFQ) the chain is Extracellular. A helical transmembrane segment spans residues 1167–1187 (ILFAVFDSLEGFVIVMVHCIL). Topologically, residues 1188-1584 (RREVQDAVKC…QDIIDLQTEV (397 aa)) are cytoplasmic. Residues 1365-1584 (YSIHIDQMPQ…QDIIDLQTEV (220 aa)) form an involved in interaction with MAGI1 region. 2 disordered regions span residues 1385–1475 (EASL…RRKS) and 1501–1548 (RKLQ…KKEL). Residues 1391-1439 (RSPPSRQPPSGGPPEAPPAQPPPPPPPPPPPPQQPLPPPPNLEPAPPSL) show a composition bias toward pro residues. Polar residues predominate over residues 1453-1469 (TGPSTKNENVATLSVSS). The residue at position 1469 (serine 1469) is a Phosphoserine. The span at 1501–1522 (RKLQHAAEKDKEVLGPDSKPEK) shows a compositional bias: basic and acidic residues. Positions 1581-1584 (QTEV) are indispensable for interaction with MAGI1.

The protein belongs to the G-protein coupled receptor 2 family. LN-TM7 subfamily. Interacts with ELMO1 and DOCK. When bound to ELMO1 and DOCK1, acts as a module to promote apoptotic cell engulfment. Interacts with MDM2; the interaction results in inhibition of MDM2-mediated ubiquitination and degradation of DLG4/PSD95. Interacts with PARD3 and TIAM1; the interaction is required for correct dendritic. localization of PARD3 and TIAM1 and for dendritic spine formation. Interacts with MAGI1. Interacts with MAGI3. Interacts with BAIAP2. Interacts with PHYHIP. Interacts with DLG4 (via PDZ domain). Vasculostatin-120: Interacts with CD36. Vasculostatin-120: Interacts with ARRB2. Interacts with BAIAP3; this interaction is direct. Post-translationally, proteolytically cleaved to produce vasculostatin-40 and vasculostatin-120. Vasculostatin-40 is the major form and is produced through proteolytic cleavage by MMP14 between residues 321 and 329 with cleavage likely to be between Ser-326 and Leu-327. Ubiquitinated. Expressed in brain (at protein level). Expressed on mononuclear phagocytes and monocyte-derived macrophages in the gastric mucosa (at protein level). Expressed in normal pancreatic tissue but not in pancreatic tumor tissue. Reduced or no expression is observed in some glioblastomas.

It localises to the cell membrane. The protein resides in the cell projection. Its subcellular location is the phagocytic cup. It is found in the cell junction. The protein localises to the focal adhesion. It localises to the dendritic spine. The protein resides in the postsynaptic density. Its subcellular location is the secreted. Phosphatidylserine receptor which enhances the engulfment of apoptotic cells. Also mediates the binding and engulfment of Gram-negative bacteria. Stimulates production of reactive oxygen species by macrophages in response to Gram-negative bacteria, resulting in enhanced microbicidal macrophage activity. In the gastric mucosa, required for recognition and engulfment of apoptotic gastric epithelial cells. Promotes myoblast fusion. Activates the Rho pathway in a G-protein-dependent manner. Inhibits MDM2-mediated ubiquitination and degradation of DLG4/PSD95, promoting DLG4 stability and regulating synaptic plasticity. Required for the formation of dendritic spines by ensuring the correct localization of PARD3 and TIAM1. Potent inhibitor of angiogenesis in brain and may play a significant role as a mediator of the p53/TP53 signal in suppression of glioblastoma. Functionally, inhibits angiogenesis in a CD36-dependent manner. In terms of biological role, inhibits angiogenesis. The chain is Adhesion G protein-coupled receptor B1 from Homo sapiens (Human).